The sequence spans 95 residues: Small ribosomal subunit protein bS6 (95 aa).

Belongs to the bacterial ribosomal protein bS6 family.

Its function is as follows. Binds together with bS18 to 16S ribosomal RNA. The sequence is that of Small ribosomal subunit protein bS6 from Bacillus licheniformis (strain ATCC 14580 / DSM 13 / JCM 2505 / CCUG 7422 / NBRC 12200 / NCIMB 9375 / NCTC 10341 / NRRL NRS-1264 / Gibson 46).